Here is a 263-residue protein sequence, read N- to C-terminus: MASSSSVLLVVALFAVFLGSAHGIAKVPPGPNITAEYGDKWLDAKSTWYGKPTGAGPKDNGGACGYKNVDKAPFNGMTGCGNTPIFKDGRGCGSCFEIKCTKPESCSGEAVTVTITDDNEEPIAPYHFDLSGHAFGSMAKKGEEQNVRSAGELELQFRRVKCKYPDDTKPTFHVEKASNPNYLAILVKYVDGDGDVVAVDIKEKGKDKWIELKESWGAVWRIDTPDKLTGPFTVRYTTEGGTKSEFEDVIPEGWKADTSYSAK.

The signal sequence occupies residues 1-23 (MASSSSVLLVVALFAVFLGSAHG). Residue Asn-32 is glycosylated (N-linked (GlcNAc...) asparagine). The region spanning 61-167 (GGACGYKNVD…RRVKCKYPDD (107 aa)) is the Expansin-like EG45 domain. In terms of domain architecture, Expansin-like CBD spans 181–262 (NYLAILVKYV…GWKADTSYSA (82 aa)).

Belongs to the expansin family. Expansin B subfamily.

Its subcellular location is the secreted. This is Pollen allergen Lol p 1 from Lolium perenne (Perennial ryegrass).